We begin with the raw amino-acid sequence, 362 residues long: UDP-3-O-acylglucosamine N-acyltransferase 1 (362 aa).

Histidine 258 functions as the Proton acceptor in the catalytic mechanism.

The protein belongs to the transferase hexapeptide repeat family. LpxD subfamily. In terms of assembly, homotrimer.

The catalysed reaction is a UDP-3-O-[(3R)-3-hydroxyacyl]-alpha-D-glucosamine + a (3R)-hydroxyacyl-[ACP] = a UDP-2-N,3-O-bis[(3R)-3-hydroxyacyl]-alpha-D-glucosamine + holo-[ACP] + H(+). It participates in bacterial outer membrane biogenesis; LPS lipid A biosynthesis. In terms of biological role, catalyzes the N-acylation of UDP-3-O-acylglucosamine using 3-hydroxyacyl-ACP as the acyl donor. Is involved in the biosynthesis of lipid A, a phosphorylated glycolipid that anchors the lipopolysaccharide to the outer membrane of the cell. The chain is UDP-3-O-acylglucosamine N-acyltransferase 1 from Nitrobacter winogradskyi (strain ATCC 25391 / DSM 10237 / CIP 104748 / NCIMB 11846 / Nb-255).